Here is a 284-residue protein sequence, read N- to C-terminus: Tropomyosin Tod p 1.0102 (284 aa).

Positions 15–273 (KEVATDKAEQ…KERYKSISDE (259 aa)) form a coiled coil. The interval 103–136 (EERLTSAQSKLEDASKAADESERGRKVLENRSQG) is disordered.

The protein belongs to the tropomyosin family. As to quaternary structure, homodimer. In terms of processing, the N-terminus is blocked. As to expression, expressed in mantle muscle (at protein level).

Tropomyosin, in association with the troponin complex, plays a central role in the calcium dependent regulation of muscle contraction. The sequence is that of Tropomyosin Tod p 1.0102 from Todarodes pacificus (Japanese flying squid).